We begin with the raw amino-acid sequence, 370 residues long: DNA polymerase IV (370 aa).

The 185-residue stretch at 14–198 (IIHIDMDAFF…LPIEKFYGVG (185 aa)) folds into the UmuC domain. Mg(2+) contacts are provided by aspartate 18 and aspartate 116. Residue glutamate 117 is part of the active site.

The protein belongs to the DNA polymerase type-Y family. In terms of assembly, monomer. It depends on Mg(2+) as a cofactor.

The protein localises to the cytoplasm. It catalyses the reaction DNA(n) + a 2'-deoxyribonucleoside 5'-triphosphate = DNA(n+1) + diphosphate. In terms of biological role, poorly processive, error-prone DNA polymerase involved in untargeted mutagenesis. Copies undamaged DNA at stalled replication forks, which arise in vivo from mismatched or misaligned primer ends. These misaligned primers can be extended by PolIV. Exhibits no 3'-5' exonuclease (proofreading) activity. May be involved in translesional synthesis, in conjunction with the beta clamp from PolIII. This is DNA polymerase IV from Streptococcus mutans serotype c (strain ATCC 700610 / UA159).